We begin with the raw amino-acid sequence, 549 residues long: Cilia- and flagella-associated protein 45 (549 aa).

Residues 1–27 (MPLSTAGVLSSASTASNRSRNRPRYRT) are disordered. 2 coiled-coil regions span residues 119-232 (KEEL…MMEV) and 259-393 (IVEQ…KRNQ). A disordered region spans residues 391 to 416 (RNQEVADREWRRKEKENAQKKMETEA).

The protein belongs to the CFAP45 family. As to quaternary structure, microtubule inner protein component of sperm flagellar doublet microtubules. Interacts with AK8; dimerization with AK8 may create a cavity at the interface of the dimer that can accommodate AMP. Interacts with CFAP52. Interacts with ENKUR. Directly interacts with DNALI1. Interacts with DNAH11. Interacts with DNAI1. Expressed in trachea multiciliated cells.

The protein resides in the cytoplasm. Its subcellular location is the cytoskeleton. The protein localises to the cilium axoneme. It is found in the flagellum axoneme. It localises to the cell projection. The protein resides in the cilium. Its subcellular location is the flagellum. In terms of biological role, microtubule inner protein (MIP) part of the dynein-decorated doublet microtubules (DMTs) in cilia axoneme, which is required for motile cilia beating. It is an AMP-binding protein that may facilitate dynein ATPase-dependent ciliary and flagellar beating via adenine nucleotide homeostasis. May function as a donor of AMP to AK8 and hence promote ADP production. The chain is Cilia- and flagella-associated protein 45 from Bos taurus (Bovine).